A 728-amino-acid polypeptide reads, in one-letter code: Protein Hook homolog 1 (728 aa).

Met-1 is subject to N-acetylmethionine. A sufficient for interaction with microtubules region spans residues 1 to 555; sequence MEETQPPPQP…LKQKLEAHME (555 aa). The region spanning 12–128 is the Calponin-homology (CH) domain; sequence LPLCDSLMIW…RLLQLILGCA (117 aa). 2 coiled-coil regions span residues 169–434 and 477–658; these read PNDA…RCSQ and LRLQ…AKFR. The sufficient for homodimerization, interaction wit HOOK2, HOOK3 and AP4M1 stretch occupies residues 169-444; sequence PNDAVGELEQ…VQQDHLNQTD (276 aa). Residue Ser-235 is modified to Phosphoserine. Residues 481–512 form a disordered region; sequence QEGSENERIEELQEQLEQKHRKMNELETEQRL. The segment covering 503-512 has biased composition (basic and acidic residues); the sequence is MNELETEQRL. A sufficient for interaction with AKTIP and VPS18 region spans residues 657 to 728; sequence FRDYEEKLIV…SVKVPATTSD (72 aa). Position 699 is a phosphothreonine (Thr-699). Residues Ser-719 and Ser-727 each carry the phosphoserine modification.

It belongs to the hook family. In terms of assembly, self-associates. Component of the FTS/Hook/FHIP complex (FHF complex), composed of AKTIP/FTS, FHIP1B, and one or more members of the Hook family of proteins HOOK1, HOOK2, and HOOK3. Interacts directly with AKTIP/FTS, HOOK2 and HOOK3. Associates with several subunits of the homotypic vesicular sorting complex (the HOPS complex) including VPS16, VPS18, VPS39 and VPS41; these interactions may be indirect. Interacts with CCDC181. Interacts (via coiled-coil region) with RIMBP3 (via C-terminus). Interacts with LRGUK (via guanylate kinase-like domain). Interacts with microtubules. May interact with CLN3. Interacts with AP4M1; the interaction is direct, mediates the interaction between FTS-Hook-FHIP (FHF) complex and AP-4 and the perinuclear distribution of AP-4.

The protein resides in the cytoplasm. The protein localises to the cytoskeleton. Functionally, component of the FTS/Hook/FHIP complex (FHF complex). The FHF complex may function to promote vesicle trafficking and/or fusion via the homotypic vesicular protein sorting complex (the HOPS complex). FHF complex promotes the distribution of AP-4 complex to the perinuclear area of the cell. Required for spermatid differentiation. Probably involved in the positioning of the microtubules of the manchette and the flagellum in relation to the membrane skeleton. In Homo sapiens (Human), this protein is Protein Hook homolog 1.